Consider the following 278-residue polypeptide: Sulfur carrier protein FdhD (278 aa).

The Cysteine persulfide intermediate role is filled by cysteine 120.

Belongs to the FdhD family.

It is found in the cytoplasm. Functionally, required for formate dehydrogenase (FDH) activity. Acts as a sulfur carrier protein that transfers sulfur from IscS to the molybdenum cofactor prior to its insertion into FDH. This Bordetella petrii (strain ATCC BAA-461 / DSM 12804 / CCUG 43448) protein is Sulfur carrier protein FdhD.